Consider the following 83-residue polypeptide: Large ribosomal subunit protein bL31 (83 aa).

This sequence belongs to the bacterial ribosomal protein bL31 family. Type A subfamily. As to quaternary structure, part of the 50S ribosomal subunit.

Its function is as follows. Binds the 23S rRNA. The protein is Large ribosomal subunit protein bL31 of Synechococcus sp. (strain CC9605).